The primary structure comprises 200 residues: Putative TLC domain-containing protein L438 (200 aa).

The 193-residue stretch at 1–193 (MDYKQSNLFL…ILKILRAKLF (193 aa)) folds into the TLC domain. 6 helical membrane passes run 9–29 (FLFP…CGTF), 43–63 (THGI…LMIV), 74–94 (VHHF…YYLI), 96–116 (YLFA…AIKY), 131–151 (LAFF…LWFV), and 165–185 (YLIV…YRIL).

It is found in the membrane. The protein is Putative TLC domain-containing protein L438 of Acanthamoeba polyphaga mimivirus (APMV).